The chain runs to 168 residues: UPF0178 protein RBAM_023530 (168 aa).

This sequence belongs to the UPF0178 family.

In Bacillus velezensis (strain DSM 23117 / BGSC 10A6 / LMG 26770 / FZB42) (Bacillus amyloliquefaciens subsp. plantarum), this protein is UPF0178 protein RBAM_023530.